Consider the following 214-residue polypeptide: Ribonuclease HII (214 aa).

In terms of domain architecture, RNase H type-2 spans 26–214 (EIVCGVDEAG…PVREAFDLIR (189 aa)). Residues D32, E33, and D124 each coordinate a divalent metal cation.

The protein belongs to the RNase HII family. The cofactor is Mn(2+). Mg(2+) serves as cofactor.

It localises to the cytoplasm. It catalyses the reaction Endonucleolytic cleavage to 5'-phosphomonoester.. Functionally, endonuclease that specifically degrades the RNA of RNA-DNA hybrids. This Burkholderia thailandensis (strain ATCC 700388 / DSM 13276 / CCUG 48851 / CIP 106301 / E264) protein is Ribonuclease HII.